The chain runs to 446 residues: Sterile alpha motif domain-containing protein 7 (446 aa).

Positions 94 to 168 are required for localization to nuclear polycomb bodies; it reads HTARTEMEMY…NLQGNPMLAA (75 aa). Disordered regions lie at residues 187–207 and 225–277; these read NTGN…QAEE and KDPD…AWDD. Residues 232 to 249 are compositionally biased toward polar residues; that stretch reads PSNQKSSETNEKPTTALA. An SAM domain is found at 327-392; sequence WTVDDVHSFI…SQVSQHVGSM (66 aa).

Monomer, homodimer and homooligomer. Component of a Polycomb group (PcG) multiprotein PRC1-like complex. Interacts with PHC2, NR2E3 and SAMD11. Interacts with RNF1 in a PHC2-dependent manner. Expressed in the retina (at protein level). Expressed in the retinal inner and outer nuclear layers.

Its subcellular location is the nucleus. The protein resides in the cytoplasm. In terms of biological role, component of a Polycomb group (PcG) multiprotein PRC1-like complex, essential for establishing rod photoreceptor cell identity and function by silencing nonrod gene expression in developing rod photoreceptor cells. Via its association with the PRC1-like complex, promotes epigenetic repressive marks H3K27me3 and H2AK119ub marks in nonrod genes, silencing their transcription. Represses Crx-controlled photoreceptor-specific gene expression. The sequence is that of Sterile alpha motif domain-containing protein 7 (SAMD7) from Homo sapiens (Human).